Here is a 172-residue protein sequence, read N- to C-terminus: Large ribosomal subunit protein uL10 (172 aa).

The protein belongs to the universal ribosomal protein uL10 family. As to quaternary structure, part of the ribosomal stalk of the 50S ribosomal subunit. The N-terminus interacts with L11 and the large rRNA to form the base of the stalk. The C-terminus forms an elongated spine to which L12 dimers bind in a sequential fashion forming a multimeric L10(L12)X complex.

Its function is as follows. Forms part of the ribosomal stalk, playing a central role in the interaction of the ribosome with GTP-bound translation factors. The chain is Large ribosomal subunit protein uL10 from Pelodictyon phaeoclathratiforme (strain DSM 5477 / BU-1).